The following is a 328-amino-acid chain: Alanine racemase (328 aa).

Lys-33 serves as the catalytic Proton acceptor; specific for D-alanine. Position 33 is an N6-(pyridoxal phosphate)lysine (Lys-33). Arg-118 is a substrate binding site. Tyr-237 serves as the catalytic Proton acceptor; specific for L-alanine. Met-283 provides a ligand contact to substrate.

It belongs to the alanine racemase family. Requires pyridoxal 5'-phosphate as cofactor.

It carries out the reaction L-alanine = D-alanine. Its pathway is amino-acid biosynthesis; D-alanine biosynthesis; D-alanine from L-alanine: step 1/1. Its function is as follows. Catalyzes the interconversion of L-alanine and D-alanine. May also act on other amino acids. The chain is Alanine racemase (alr) from Campylobacter jejuni subsp. jejuni serotype O:23/36 (strain 81-176).